A 626-amino-acid chain; its full sequence is UPF0313 protein MM_1287 (626 aa).

The tract at residues 206–227 (GKGKEKAGEQDESENATEEVAK) is disordered. The region spanning 320 to 589 (ALEMVKFSLT…AMQRALMHYR (270 aa)) is the Radical SAM core domain. Residues C334, C338, and C341 each contribute to the [4Fe-4S] cluster site.

It belongs to the UPF0313 family. [4Fe-4S] cluster is required as a cofactor.

The sequence is that of UPF0313 protein MM_1287 from Methanosarcina mazei (strain ATCC BAA-159 / DSM 3647 / Goe1 / Go1 / JCM 11833 / OCM 88) (Methanosarcina frisia).